Consider the following 148-residue polypeptide: Large ribosomal subunit protein bL9 (148 aa).

It belongs to the bacterial ribosomal protein bL9 family.

In terms of biological role, binds to the 23S rRNA. The polypeptide is Large ribosomal subunit protein bL9 (Pseudomonas aeruginosa (strain LESB58)).